Consider the following 149-residue polypeptide: Transcriptional repressor NrdR (149 aa).

Residues 3-34 (CPFCSATDTKVIDSRLVADGHQVRRRRECAEC) fold into a zinc finger. In terms of domain architecture, ATP-cone spans 49-139 (PRVVKQDGSR…VYRAFEDVSE (91 aa)).

Belongs to the NrdR family. Zn(2+) serves as cofactor.

Negatively regulates transcription of bacterial ribonucleotide reductase nrd genes and operons by binding to NrdR-boxes. The protein is Transcriptional repressor NrdR of Shewanella woodyi (strain ATCC 51908 / MS32).